A 304-amino-acid chain; its full sequence is uncharacterized protein (304 aa).

Residues 1–10 (MLWAHRKKRK) are compositionally biased toward basic residues. Residues 1–28 (MLWAHRKKRKAATETTEDKPLESHRAND) are disordered. The segment covering 16-27 (TEDKPLESHRAN) has biased composition (basic and acidic residues). S39 is modified (phosphoserine). Positions 91–101 (KQKISGSSMTK) are enriched in polar residues. Disordered stretches follow at residues 91–115 (KQKI…SMED), 138–160 (SMLQ…ISPE), and 190–304 (SHTV…IYGS). The span at 151-160 (HAESRNISPE) shows a compositional bias: basic and acidic residues. S158 bears the Phosphoserine mark. A compositionally biased stretch (low complexity) spans 195 to 206 (SQSRHSNQSHHS). Over residues 208-223 (PSHQSNQSHPVYSSYQ) the composition is skewed to polar residues. The segment covering 229-248 (HLSPQSYPSYSSHQSHPGHS) has biased composition (low complexity). Residues 249–263 (NHQGHSGLSSHQTHL) are compositionally biased toward polar residues. Low complexity predominate over residues 264 to 292 (GHSNHQGHPGHSSHQSHQGQPGHPSHQSH).

This is an uncharacterized protein from Mus musculus (Mouse).